Consider the following 437-residue polypeptide: Na(+)/H(+) antiporter NhaA (437 aa).

The next 11 helical transmembrane spans lie at 12 to 32 (SMNI…AVIA), 65 to 85 (LTMI…MVGL), 103 to 123 (ALPF…YSMV), 133 to 153 (GLAI…SLLG), 162 to 182 (IFLT…IAIF), 186 to 206 (HVAY…YFIG), 214 to 234 (IFFL…GIHS), 308 to 328 (GAVN…VMFS), 333 to 353 (VIGG…FLGI), 377 to 397 (ISGV…IANL), and 412 to 432 (LGVL…LHWV).

The protein belongs to the NhaA Na(+)/H(+) (TC 2.A.33) antiporter family.

Its subcellular location is the cell inner membrane. The catalysed reaction is Na(+)(in) + 2 H(+)(out) = Na(+)(out) + 2 H(+)(in). In terms of biological role, na(+)/H(+) antiporter that extrudes sodium in exchange for external protons. The sequence is that of Na(+)/H(+) antiporter NhaA from Bacteroides fragilis (strain YCH46).